Here is a 118-residue protein sequence, read N- to C-terminus: Iron-sulfur cluster insertion protein ErpA (118 aa).

Cysteine 46, cysteine 110, and cysteine 112 together coordinate iron-sulfur cluster.

The protein belongs to the HesB/IscA family. As to quaternary structure, homodimer. It depends on iron-sulfur cluster as a cofactor.

Its function is as follows. Required for insertion of 4Fe-4S clusters for at least IspG. This chain is Iron-sulfur cluster insertion protein ErpA, found in Psychromonas ingrahamii (strain DSM 17664 / CCUG 51855 / 37).